Reading from the N-terminus, the 240-residue chain is Adenylate dimethylallyltransferase (240 aa).

The protein belongs to the isopentenyl transferase family.

It carries out the reaction dimethylallyl diphosphate + AMP = N(6)-(dimethylallyl)adenosine 5'-phosphate + diphosphate. Its function is as follows. Transfers dimethylallyl groups to AMP as part of the biosynthesis of cytokinin phytohormones. This chain is Adenylate dimethylallyltransferase (izt), found in Agrobacterium fabrum (strain C58 / ATCC 33970) (Agrobacterium tumefaciens (strain C58)).